The following is a 217-amino-acid chain: 25 kDa ookinete surface antigen (217 aa).

The first 16 residues, methionine 1–serine 16, serve as a signal peptide directing secretion. The region spanning cysteine 30–glutamate 59 is the EGF-like 1; truncated domain. 3 consecutive EGF-like domains span residues lysine 61–isoleucine 106, isoleucine 106–serine 150, and glycine 153–threonine 193. Disulfide bonds link cysteine 65/cysteine 80, cysteine 74/cysteine 92, cysteine 94/cysteine 105, cysteine 110/cysteine 120, cysteine 115/cysteine 133, cysteine 135/cysteine 149, cysteine 157/cysteine 168, cysteine 161/cysteine 177, and cysteine 179/cysteine 192. A glycan (N-linked (GlcNAc...) asparagine) is linked at asparagine 112. N-linked (GlcNAc...) asparagine glycosylation is found at asparagine 165 and asparagine 187. Serine 196 carries the GPI-anchor amidated serine lipid modification. A propeptide spans valine 197 to methionine 217 (removed in mature form). Asparagine 202 is a glycosylation site (N-linked (GlcNAc...) asparagine).

Its subcellular location is the cell membrane. The chain is 25 kDa ookinete surface antigen from Plasmodium reichenowi.